The following is a 332-amino-acid chain: NADH-quinone oxidoreductase subunit H (332 aa).

The next 9 helical transmembrane spans lie at 4-24, 44-64, 78-98, 120-140, 165-185, 194-214, 255-275, 279-299, and 312-332; these read FAFF…IFAS, IGPD…MIKL, FIFA…LAAI, VALL…FLGG, VGAL…LVDI, FSWL…ALFI, IAGA…FWII, IMMI…RAAF, and YLIL…TVLL.

Belongs to the complex I subunit 1 family. NDH-1 is composed of 14 different subunits. Subunits NuoA, H, J, K, L, M, N constitute the membrane sector of the complex.

Its subcellular location is the cell inner membrane. It catalyses the reaction a quinone + NADH + 5 H(+)(in) = a quinol + NAD(+) + 4 H(+)(out). Functionally, NDH-1 shuttles electrons from NADH, via FMN and iron-sulfur (Fe-S) centers, to quinones in the respiratory chain. The immediate electron acceptor for the enzyme in this species is believed to be ubiquinone. Couples the redox reaction to proton translocation (for every two electrons transferred, four hydrogen ions are translocated across the cytoplasmic membrane), and thus conserves the redox energy in a proton gradient. This subunit may bind ubiquinone. The polypeptide is NADH-quinone oxidoreductase subunit H (Campylobacter jejuni subsp. jejuni serotype O:2 (strain ATCC 700819 / NCTC 11168)).